The primary structure comprises 343 residues: Protein RecA (343 aa).

Residue 65–72 (GPESSGKT) participates in ATP binding.

The protein belongs to the RecA family.

The protein resides in the cytoplasm. In terms of biological role, can catalyze the hydrolysis of ATP in the presence of single-stranded DNA, the ATP-dependent uptake of single-stranded DNA by duplex DNA, and the ATP-dependent hybridization of homologous single-stranded DNAs. It interacts with LexA causing its activation and leading to its autocatalytic cleavage. The polypeptide is Protein RecA (Xanthomonas campestris pv. campestris (strain 8004)).